Consider the following 861-residue polypeptide: Probable linoleate 9S-lipoxygenase 3 (861 aa).

The 128-residue stretch at 33-160 (FTDLASSLTG…NYKSDRIFFA (128 aa)) folds into the PLAT domain. The Lipoxygenase domain maps to 163–861 (PYLPSDTPEL…GKGIPNSVSI (699 aa)). The disordered stretch occupies residues 220–247 (TLGGSAEYPYPRRGRTGRPPTRTDPKSE). Fe cation-binding residues include His522, His527, His713, Asn717, and Ile861.

This sequence belongs to the lipoxygenase family. As to quaternary structure, monomer. Fe cation is required as a cofactor. Expressed in tubers and roots. Not detected in leaves, flowers, stems, shoot tips, or axillary buds.

It localises to the cytoplasm. The catalysed reaction is (9Z,12Z)-octadecadienoate + O2 = (9S)-hydroperoxy-(10E,12Z)-octadecadienoate. The protein operates within lipid metabolism; oxylipin biosynthesis. Its function is as follows. Plant lipoxygenases may be involved in a number of diverse aspects of plant physiology including growth and development, pest resistance, and senescence or responses to wounding. Catalyzes the hydroperoxidation of lipids containing a cis,cis-1,4-pentadiene structure. The sequence is that of Probable linoleate 9S-lipoxygenase 3 (LOX1.3) from Solanum tuberosum (Potato).